The sequence spans 146 residues: Hemoglobin subunit beta (146 aa).

At V1 the chain carries N-acetylvaline. The 145-residue stretch at 2-146 (HLTGEEKSAV…VATALAHKYH (145 aa)) folds into the Globin domain. A Phosphothreonine modification is found at T12. Residue S44 is modified to Phosphoserine. H63 lines the heme b pocket. K82 bears the N6-acetyllysine mark. Heme b is bound at residue H92. S-nitrosocysteine is present on C93. At K144 the chain carries N6-acetyllysine.

The protein belongs to the globin family. In terms of assembly, heterotetramer of two alpha chains and two beta chains. Red blood cells.

Involved in oxygen transport from the lung to the various peripheral tissues. The polypeptide is Hemoglobin subunit beta (HBB) (Tursiops truncatus (Atlantic bottle-nosed dolphin)).